The chain runs to 413 residues: Endoplasmic reticulum resident protein 44.2 (413 aa).

Positions Met1–Gly21 are cleaved as a signal peptide. Positions Gln22–Ser136 constitute a Thioredoxin domain. The cysteines at positions 184 and 233 are disulfide-linked. N-linked (GlcNAc...) asparagine glycosylation is present at Asn264. The tract at residues Lys367–Leu413 is disordered. Basic and acidic residues predominate over residues Lys396 to Leu413. Residues Lys410–Leu413 carry the Prevents secretion from ER motif.

Its subcellular location is the endoplasmic reticulum lumen. The sequence is that of Endoplasmic reticulum resident protein 44.2 from Caenorhabditis elegans.